The following is a 148-amino-acid chain: 3-dehydroquinate dehydratase (148 aa).

Tyrosine 24 serves as the catalytic Proton acceptor. Residues asparagine 75, histidine 81, and aspartate 88 each coordinate substrate. Histidine 101 acts as the Proton donor in catalysis. Substrate contacts are provided by residues 102-103 (LS) and arginine 112.

It belongs to the type-II 3-dehydroquinase family. As to quaternary structure, homododecamer.

It carries out the reaction 3-dehydroquinate = 3-dehydroshikimate + H2O. Its pathway is metabolic intermediate biosynthesis; chorismate biosynthesis; chorismate from D-erythrose 4-phosphate and phosphoenolpyruvate: step 3/7. In terms of biological role, catalyzes a trans-dehydration via an enolate intermediate. The chain is 3-dehydroquinate dehydratase from Rhizobium meliloti (strain 1021) (Ensifer meliloti).